The chain runs to 321 residues: Glucokinase (321 aa).

8–13 (ADIGGT) provides a ligand contact to ATP.

This sequence belongs to the bacterial glucokinase family.

The protein localises to the cytoplasm. The enzyme catalyses D-glucose + ATP = D-glucose 6-phosphate + ADP + H(+). This Paramagnetospirillum magneticum (strain ATCC 700264 / AMB-1) (Magnetospirillum magneticum) protein is Glucokinase.